We begin with the raw amino-acid sequence, 806 residues long: Dimethyl sulfoxide reductase DmsA (806 aa).

Residues 1-35 (MSNFNQISRRDFVKASSAGAALAVSNLTLPFNVMA) constitute a signal peptide (tat-type signal). Positions 47–109 (ERIVWSACTV…SMRRRVYNPD (63 aa)) constitute a 4Fe-4S Mo/W bis-MGD-type domain. The [4Fe-4S] cluster site is built by Cys-54, Cys-58, Cys-62, and Cys-95. Residues 163–167 (LGGTM), Ser-196, 236–237 (ET), 262–263 (ID), 283–285 (GTD), 378–379 (WG), Arg-382, Asn-480, 504–505 (ID), His-693, 699–701 (HST), Asn-780, and 796–797 (QH) contribute to the Mo-bis(molybdopterin guanine dinucleotide) site. The disordered stretch occupies residues 786-806 (RPSPLAKGNPQHSNLVQVERL). A compositionally biased stretch (polar residues) spans 795–806 (PQHSNLVQVERL).

It belongs to the prokaryotic molybdopterin-containing oxidoreductase family. As to quaternary structure, heterotrimeric enzyme composed of a catalytic heterodimer (DmsAB) and a membrane anchor protein (DmsC). It depends on [4Fe-4S] cluster as a cofactor. Mo-bis(molybdopterin guanine dinucleotide) serves as cofactor. Post-translationally, predicted to be exported by the Tat system. The position of the signal peptide cleavage has not been experimentally proven.

It localises to the cell membrane. The catalysed reaction is dimethyl sulfide + a menaquinone + H2O = dimethyl sulfoxide + a menaquinol. Functionally, catalyzes the reduction of dimethyl sulfoxide (DMSO) to dimethyl sulfide (DMS). The terminal DMSO reductase can also use various sulfoxides and N-oxide compounds as terminal electron acceptor in addition to DMSO. This is Dimethyl sulfoxide reductase DmsA (dmsA) from Haemophilus influenzae (strain ATCC 51907 / DSM 11121 / KW20 / Rd).